Reading from the N-terminus, the 280-residue chain is Probable 2-(5''-triphosphoribosyl)-3'-dephosphocoenzyme-A synthase (280 aa).

Belongs to the CitG/MdcB family.

It catalyses the reaction 3'-dephospho-CoA + ATP = 2'-(5''-triphospho-alpha-D-ribosyl)-3'-dephospho-CoA + adenine. In Lactiplantibacillus plantarum (strain ATCC BAA-793 / NCIMB 8826 / WCFS1) (Lactobacillus plantarum), this protein is Probable 2-(5''-triphosphoribosyl)-3'-dephosphocoenzyme-A synthase.